We begin with the raw amino-acid sequence, 332 residues long: 5-formaminoimidazole-4-carboxamide-1-(beta)-D-ribofuranosyl 5'-monophosphate synthetase (332 aa).

5-amino-1-(5-phospho-beta-D-ribosyl)imidazole-4-carboxamide is bound by residues histidine 9 and serine 72. The region spanning 93–323 is the ATP-grasp domain; that stretch reads RNLFPWESNQ…IGREINLAIQ (231 aa). ATP is bound by residues 123 to 183 and glutamate 205; that span reads PEDV…IPMY. Asparagine 229 contacts 5-amino-1-(5-phospho-beta-D-ribosyl)imidazole-4-carboxamide. 2 residues coordinate Mg(2+): glutamate 268 and glutamate 281.

The protein belongs to the phosphohexose mutase family. It depends on Mg(2+) as a cofactor. Mn(2+) serves as cofactor.

It catalyses the reaction 5-amino-1-(5-phospho-beta-D-ribosyl)imidazole-4-carboxamide + formate + ATP = 5-formamido-1-(5-phospho-D-ribosyl)imidazole-4-carboxamide + ADP + phosphate. It participates in purine metabolism; IMP biosynthesis via de novo pathway; 5-formamido-1-(5-phospho-D-ribosyl)imidazole-4-carboxamide from 5-amino-1-(5-phospho-D-ribosyl)imidazole-4-carboxamide (formate route): step 1/1. Its function is as follows. Catalyzes the ATP- and formate-dependent formylation of 5-aminoimidazole-4-carboxamide-1-beta-d-ribofuranosyl 5'-monophosphate (AICAR) to 5-formaminoimidazole-4-carboxamide-1-beta-d-ribofuranosyl 5'-monophosphate (FAICAR) in the absence of folates. The chain is 5-formaminoimidazole-4-carboxamide-1-(beta)-D-ribofuranosyl 5'-monophosphate synthetase from Metallosphaera sedula (strain ATCC 51363 / DSM 5348 / JCM 9185 / NBRC 15509 / TH2).